A 239-amino-acid chain; its full sequence is Pyridoxine 5'-phosphate synthase (239 aa).

3-amino-2-oxopropyl phosphate is bound at residue N7. A 1-deoxy-D-xylulose 5-phosphate-binding site is contributed by 9 to 10 (DH). R18 is a 3-amino-2-oxopropyl phosphate binding site. H43 functions as the Proton acceptor in the catalytic mechanism. 1-deoxy-D-xylulose 5-phosphate is bound by residues R45 and H50. The active-site Proton acceptor is the E70. T100 is a binding site for 1-deoxy-D-xylulose 5-phosphate. H191 serves as the catalytic Proton donor. 3-amino-2-oxopropyl phosphate is bound by residues G192 and 213-214 (GH).

Belongs to the PNP synthase family. Homooctamer; tetramer of dimers.

It is found in the cytoplasm. The catalysed reaction is 3-amino-2-oxopropyl phosphate + 1-deoxy-D-xylulose 5-phosphate = pyridoxine 5'-phosphate + phosphate + 2 H2O + H(+). The protein operates within cofactor biosynthesis; pyridoxine 5'-phosphate biosynthesis; pyridoxine 5'-phosphate from D-erythrose 4-phosphate: step 5/5. Its function is as follows. Catalyzes the complicated ring closure reaction between the two acyclic compounds 1-deoxy-D-xylulose-5-phosphate (DXP) and 3-amino-2-oxopropyl phosphate (1-amino-acetone-3-phosphate or AAP) to form pyridoxine 5'-phosphate (PNP) and inorganic phosphate. This is Pyridoxine 5'-phosphate synthase from Geotalea daltonii (strain DSM 22248 / JCM 15807 / FRC-32) (Geobacter daltonii).